Here is a 1222-residue protein sequence, read N- to C-terminus: Chitin synthase 4 (1222 aa).

The interval 1–108 (MSLPERPGGI…NRIDKDHPNY (108 aa)) is disordered. Over residues 51–68 (LSANSFAETIPSPNNSFV) the composition is skewed to polar residues. Asn64 carries an N-linked (GlcNAc...) asparagine glycan. A compositionally biased stretch (basic and acidic residues) spans 94 to 107 (IRPERNRIDKDHPN). Residue Asn116 is glycosylated (N-linked (GlcNAc...) asparagine). Residues 136–199 (TTDVSGSRSQ…KSTKKRSTPQ (64 aa)) form a disordered region. Residues 137-154 (TDVSGSRSQTLDGVSDTS) show a composition bias toward polar residues. Positions 176–196 (SAKRVSRHKSGKITKSTKKRS) are enriched in basic residues. Transmembrane regions (helical) follow at residues 204-224 (PPSF…DFML) and 242-262 (MGLI…TFGF). N-linked (GlcNAc...) asparagine glycans are attached at residues Asn378 and Asn418. Residues 509 to 529 (YVFLALILSVVGSRFVLALIF) form a helical membrane-spanning segment. The interval 595–662 (RFSTVYGPDR…PPSDGPGPAG (68 aa)) is disordered. Polar residues predominate over residues 608–643 (NKRVPTTMASSGGSGSQLLHPNSMYRQGNDSRSSFL). N-linked (GlcNAc...) asparagine glycosylation is found at Asn636 and Asn1031. 3 helical membrane passes run 1056-1076 (FIVF…AFTF), 1090-1110 (VIPL…IVIT), and 1116-1136 (YLVW…VLPV). Residues 1201–1222 (GGGNSWSMPPGHQYHDDYYSDA) are disordered. Residues 1213 to 1222 (QYHDDYYSDA) show a composition bias toward basic and acidic residues.

It belongs to the chitin synthase family. Class IV subfamily.

It is found in the cell membrane. It carries out the reaction [(1-&gt;4)-N-acetyl-beta-D-glucosaminyl](n) + UDP-N-acetyl-alpha-D-glucosamine = [(1-&gt;4)-N-acetyl-beta-D-glucosaminyl](n+1) + UDP + H(+). Its function is as follows. Polymerizes chitin, a structural polymer of the cell wall and septum, by transferring the sugar moiety of UDP-GlcNAc to the non-reducing end of the growing chitin polymer. Plays a role in cell wall integrity and is involved in tolerance to hyperosmotic conditions. Required to successfully penetrate the host plants and thus plays a key role in pathogenicity. This Verticillium dahliae (strain VdLs.17 / ATCC MYA-4575 / FGSC 10137) (Verticillium wilt) protein is Chitin synthase 4.